A 348-amino-acid polypeptide reads, in one-letter code: Phosphate acyltransferase (348 aa).

The protein belongs to the PlsX family. In terms of assembly, homodimer. Probably interacts with PlsY.

The protein resides in the cytoplasm. It carries out the reaction a fatty acyl-[ACP] + phosphate = an acyl phosphate + holo-[ACP]. The protein operates within lipid metabolism; phospholipid metabolism. In terms of biological role, catalyzes the reversible formation of acyl-phosphate (acyl-PO(4)) from acyl-[acyl-carrier-protein] (acyl-ACP). This enzyme utilizes acyl-ACP as fatty acyl donor, but not acyl-CoA. The sequence is that of Phosphate acyltransferase from Synechocystis sp. (strain ATCC 27184 / PCC 6803 / Kazusa).